The following is a 272-amino-acid chain: Serine/arginine-rich splicing factor 5 (272 aa).

The region spanning 4–74 (CRVFIGRLNP…ERVTIEHARA (71 aa)) is the RRM 1 domain. The interval 73 to 105 (RARSRGGRGRGRYSDRFSSRRPRNDRRNAPPVR) is disordered. The segment covering 74–83 (ARSRGGRGRG) has biased composition (basic residues). Serine 86 is modified (phosphoserine). Residues 108–181 (NRLIVENLSS…RKIKLIEGSK (74 aa)) enclose the RRM 2 domain. An N6-acetyllysine modification is found at lysine 167. Residues 174–272 (IKLIEGSKRH…SRSRSVDSGN (99 aa)) form a disordered region. The span at 182-229 (RHSRSRSRSRSRTRSSSRSRSRSRSRSRKSYSRSRSRSRSRSRSKSRS) shows a compositional bias: basic residues. 5 positions are modified to phosphoserine: serine 227, serine 229, serine 233, serine 250, and serine 253. Residues 242–254 (RGSSSRSKSPASV) show a composition bias toward low complexity.

It belongs to the splicing factor SR family. In terms of assembly, interacts (via RS domain) with PHF5A (via N-terminus). Found in a pre-mRNA splicing complex with SRSF4/SFRS4, SRSF5/SFRS5, SNRNP70, SNRPA1, SRRM1 and SRRM2. Extensively phosphorylated on serine residues in the RS domain.

It is found in the nucleus. Functionally, plays a role in constitutive splicing and can modulate the selection of alternative splice sites. The protein is Serine/arginine-rich splicing factor 5 (SRSF5) of Homo sapiens (Human).